Here is a 497-residue protein sequence, read N- to C-terminus: Protein FAM114A2 (497 aa).

The segment at 1-54 is disordered; it reads MSDKDPPESPVVTGVASTLKDENCEPVEKPEDKSQPVVSTRKRPETKPSSDLEA. A compositionally biased stretch (basic and acidic residues) spans 19 to 34; sequence LKDENCEPVEKPEDKS. 2 positions are modified to phosphoserine: S84 and S205. The interval 344-364 is disordered; that stretch reads VAEKEEGEKESEAGNTEEAQK.

It belongs to the FAM114 family.

This is Protein FAM114A2 (Fam114a2) from Mus musculus (Mouse).